We begin with the raw amino-acid sequence, 439 residues long: Trigger factor (439 aa).

One can recognise a PPIase FKBP-type domain in the interval Gly-163 to Pro-248.

The protein belongs to the FKBP-type PPIase family. Tig subfamily.

Its subcellular location is the cytoplasm. It catalyses the reaction [protein]-peptidylproline (omega=180) = [protein]-peptidylproline (omega=0). Its function is as follows. Involved in protein export. Acts as a chaperone by maintaining the newly synthesized protein in an open conformation. Functions as a peptidyl-prolyl cis-trans isomerase. This Syntrophotalea carbinolica (strain DSM 2380 / NBRC 103641 / GraBd1) (Pelobacter carbinolicus) protein is Trigger factor.